The following is a 319-amino-acid chain: tRNA-cytidine(32) 2-sulfurtransferase (319 aa).

The PP-loop motif motif lies at 43–48 (SGGKDS). Positions 118, 121, and 209 each coordinate [4Fe-4S] cluster.

The protein belongs to the TtcA family. Homodimer. Mg(2+) serves as cofactor. [4Fe-4S] cluster is required as a cofactor.

The protein resides in the cytoplasm. It carries out the reaction cytidine(32) in tRNA + S-sulfanyl-L-cysteinyl-[cysteine desulfurase] + AH2 + ATP = 2-thiocytidine(32) in tRNA + L-cysteinyl-[cysteine desulfurase] + A + AMP + diphosphate + H(+). It participates in tRNA modification. Its function is as follows. Catalyzes the ATP-dependent 2-thiolation of cytidine in position 32 of tRNA, to form 2-thiocytidine (s(2)C32). The sulfur atoms are provided by the cysteine/cysteine desulfurase (IscS) system. This is tRNA-cytidine(32) 2-sulfurtransferase from Neisseria meningitidis serogroup A / serotype 4A (strain DSM 15465 / Z2491).